The chain runs to 431 residues: Helix-loop-helix protein 11 (431 aa).

Positions 88–109 (LANRSLSQPAPLSPTSLDPDRR) are disordered. The segment covering 91-103 (RSLSQPAPLSPTS) has biased composition (polar residues). The region spanning 112-163 (MRRQIANCNERRRMQSINAGFLALRALLPRKEGEKLSKAAILQQTADMVHQL) is the bHLH domain. Composition is skewed to polar residues over residues 226–241 (TTTS…PRSN) and 248–257 (LPSSYASSAL). The segment at 226–311 (TTTSSQASSP…PPPTLPSLET (86 aa)) is disordered. A compositionally biased stretch (low complexity) spans 274-291 (TTSTPLSLLTLNGSPTSS).

Expressed in the pharynx, nerve cords, the H-shaped excretory cell, vulva muscles, and the anal depressor (at protein level). Expressed in the intestine (at protein level). In males, it is also expressed in the spicules and hyp7 cells of the hypodermis (at protein level).

It is found in the nucleus. Transcriptional regulator. Component of a feedback loop involving atfs-1, atgl-1 and hlh-11. Binds to the promoter of the atgl-1 lipase to negatively regulate the expression of atgl-1, and thereby promoting fat oxidation in response to mitochondrial stress and mitochondrial respiration in the intestine. In addition, functions with atfs-1 to maintain lifespan. May have a role in fertility and in positively regulating body size. The chain is Helix-loop-helix protein 11 from Caenorhabditis elegans.